A 477-amino-acid chain; its full sequence is Putative multidrug resistance protein MdtD (477 aa).

14 consecutive transmembrane segments (helical) span residues 13-33 (LWIV…VNTA), 50-70 (SVIV…GWLA), 73-93 (VGVQ…SILC), 107-127 (VVQG…VMKI), 139-159 (FVTL…GFLV), 166-186 (WIFL…LLLM), 196-216 (FDIS…LALD), 220-240 (GMGL…AALA), 268-288 (LTAS…TPLF), 291-311 (VGMG…IIGS), 326-348 (GYRN…FPLV), 352-374 (GWIW…RFSA), 394-414 (LLSM…GILI), and 432-452 (AFIY…LAFA).

Belongs to the major facilitator superfamily. TCR/Tet family.

The protein localises to the cell inner membrane. This Serratia proteamaculans (strain 568) protein is Putative multidrug resistance protein MdtD.